A 178-amino-acid chain; its full sequence is Thymidine kinase (178 aa).

13–20 (GPMFAGKS) is an ATP binding site. Residue glutamate 85 is the Proton acceptor of the active site. Substrate is bound at residue phenylalanine 115. Residues cysteine 140 and cysteine 143 each contribute to the Zn(2+) site. 159–163 (IEIIG) contributes to the substrate binding site. Zn(2+)-binding residues include cysteine 172 and cysteine 175.

It belongs to the thymidine kinase family.

The enzyme catalyses thymidine + ATP = dTMP + ADP + H(+). The sequence is that of Thymidine kinase (TK) from Myxoma virus (strain Uriarra) (MYXV).